Here is a 346-residue protein sequence, read N- to C-terminus: Retinal homeobox protein Rx (346 aa).

An Octapeptide motif motif is present at residues 33 to 40 (HSIEAILG). Disordered regions lie at residues 46–145 (GILG…TFTT) and 194–318 (QEKL…LDEA). The segment covering 55-67 (RGARGAKERDRRL) has biased composition (basic and acidic residues). A compositionally biased stretch (pro residues) spans 83 to 92 (PSPPPAPAPA). The segment at residues 136-195 (HRRNRTTFTTYQLHELERAFEKSHYPDVYSREELAGKVNLPEVRVQVWFQNRRAKWRRQE) is a DNA-binding region (homeobox). Positions 207–225 (SPLLSFSRSPPSATLSPLG) are enriched in low complexity. The span at 226–236 (AGPGSGGGPAG) shows a compositional bias: gly residues. Positions 237–246 (GALPLESWLG) are enriched in low complexity. The span at 274–304 (YTPPPPPPPFLNSPPLGPGLQPLAPPPPSYP) shows a compositional bias: pro residues. The OAR motif lies at 323–336 (SSIAALRLKAKEHI). Residues 329 to 333 (RLKAK) carry the Nuclear localization signal motif.

It belongs to the paired homeobox family. Bicoid subfamily. Expressed in the developing eye and weakly expressed in the adult retina.

The protein resides in the nucleus. In terms of biological role, plays a critical role in eye formation by regulating the initial specification of retinal cells and/or their subsequent proliferation. Binds to the photoreceptor conserved element-I (PCE-1/Ret 1) in the photoreceptor cell-specific arrestin promoter. This is Retinal homeobox protein Rx (RAX) from Homo sapiens (Human).